Here is a 231-residue protein sequence, read N- to C-terminus: Acyl-protein thioesterase 2 (231 aa).

A lipid anchor (S-palmitoyl cysteine) is attached at cysteine 2. The residue at position 82 (serine 82) is a Phosphoserine. Catalysis depends on charge relay system residues serine 122, aspartate 176, and histidine 210.

Belongs to the AB hydrolase superfamily. AB hydrolase 2 family.

It is found in the cytoplasm. It carries out the reaction S-hexadecanoyl-L-cysteinyl-[protein] + H2O = L-cysteinyl-[protein] + hexadecanoate + H(+). The enzyme catalyses prostaglandin E2 1-glyceryl ester + H2O = prostaglandin E2 + glycerol + H(+). It catalyses the reaction 1-hexadecanoyl-sn-glycero-3-phosphocholine + H2O = sn-glycerol 3-phosphocholine + hexadecanoate + H(+). The catalysed reaction is 1-octadecanoyl-sn-glycero-3-phosphocholine + H2O = octadecanoate + sn-glycerol 3-phosphocholine + H(+). It carries out the reaction 1-hexadecanoyl-sn-glycero-3-phosphate + H2O = sn-glycerol 3-phosphate + hexadecanoate + H(+). The enzyme catalyses 1-hexadecanoyl-sn-glycero-3-phospho-L-serine + H2O = sn-glycero-3-phospho-L-serine + hexadecanoate + H(+). Functionally, acts as an acyl-protein thioesterase hydrolyzing fatty acids from S-acylated cysteine residues in proteins such as trimeric G alpha proteins, GSDMD, GAP43, ZDHHC6 or HRAS. Deacylates GAP43. Mediates depalmitoylation of ZDHHC6. Has lysophospholipase activity. Hydrolyzes prostaglandin glycerol esters (PG-Gs) in the following order prostaglandin D2-glycerol ester (PGD2-G) &gt; prostaglandin E2 glycerol ester (PGE2-G) &gt; prostaglandin F2-alpha-glycerol ester (PGF2-alpha-G). Hydrolyzes 1-arachidonoylglycerol but not 2-arachidonoylglycerol or arachidonoylethanolamide. The chain is Acyl-protein thioesterase 2 (Lypla2) from Rattus norvegicus (Rat).